The chain runs to 70 residues: MKSQTFFLLFLVVFLLAITQSEAIFGAIAGLLKNIFGKRSLRDMDTMKYLYDPSLSAADLKTLQKLMENY.

The N-terminal stretch at 1-23 is a signal peptide; it reads MKSQTFFLLFLVVFLLAITQSEA. F36 carries the post-translational modification Phenylalanine amide. Positions 40–70 are excised as a propeptide; sequence SLRDMDTMKYLYDPSLSAADLKTLQKLMENY.

This sequence belongs to the non-disulfide-bridged peptide (NDBP) superfamily. Short antimicrobial peptide (group 4) family. Expressed by the venom gland.

It is found in the secreted. It localises to the target cell membrane. Functionally, amphipathic peptide that exhibits extensive cytolytic activities against both prokaryotic and eukaryotic cells. Is more potent against Gram-positive bacteria (lethal concentration (LC)=0.25-2.9 uM) than against Gram-negative bacteria (LC=6.2-&gt;50 uM), and fungi ((LC)=14.1-&gt;50 uM). Shows hemolytic activity against rabbit erythrocytes (37.7% of inhibition at 6.25 uM) and cytolysis against rat dorsal root ganglions. In vivo, intravenous injection into mice tail provokes uncomfortable symptoms with a death rate of 12.5%. The polypeptide is Venom antimicrobial peptide-6 (Mesobuthus eupeus (Lesser Asian scorpion)).